The sequence spans 196 residues: Glycerol-3-phosphate acyltransferase (196 aa).

A run of 5 helical transmembrane segments spans residues 4 to 24, 56 to 76, 80 to 100, 114 to 134, and 155 to 175; these read LTLT…AILV, ATVL…AYFL, SLYL…PIFF, TLLP…VLVV, and VYFL…LILF.

This sequence belongs to the PlsY family. In terms of assembly, probably interacts with PlsX.

The protein localises to the cell inner membrane. The enzyme catalyses an acyl phosphate + sn-glycerol 3-phosphate = a 1-acyl-sn-glycero-3-phosphate + phosphate. It functions in the pathway lipid metabolism; phospholipid metabolism. Catalyzes the transfer of an acyl group from acyl-phosphate (acyl-PO(4)) to glycerol-3-phosphate (G3P) to form lysophosphatidic acid (LPA). This enzyme utilizes acyl-phosphate as fatty acyl donor, but not acyl-CoA or acyl-ACP. The chain is Glycerol-3-phosphate acyltransferase from Colwellia psychrerythraea (strain 34H / ATCC BAA-681) (Vibrio psychroerythus).